The sequence spans 513 residues: Light-independent protochlorophyllide reductase subunit B (513 aa).

Aspartate 36 contacts [4Fe-4S] cluster. The Proton donor role is filled by aspartate 299. 434-435 is a binding site for substrate; the sequence is GM.

This sequence belongs to the ChlB/BchB/BchZ family. Protochlorophyllide reductase is composed of three subunits; ChlL, ChlN and ChlB. Forms a heterotetramer of two ChlB and two ChlN subunits. The cofactor is [4Fe-4S] cluster.

The protein localises to the plastid. The protein resides in the chloroplast. The catalysed reaction is chlorophyllide a + oxidized 2[4Fe-4S]-[ferredoxin] + 2 ADP + 2 phosphate = protochlorophyllide a + reduced 2[4Fe-4S]-[ferredoxin] + 2 ATP + 2 H2O. Its pathway is porphyrin-containing compound metabolism; chlorophyll biosynthesis (light-independent). In terms of biological role, component of the dark-operative protochlorophyllide reductase (DPOR) that uses Mg-ATP and reduced ferredoxin to reduce ring D of protochlorophyllide (Pchlide) to form chlorophyllide a (Chlide). This reaction is light-independent. The NB-protein (ChlN-ChlB) is the catalytic component of the complex. This Staurastrum punctulatum (Green alga) protein is Light-independent protochlorophyllide reductase subunit B.